The chain runs to 174 residues: ATP synthase subunit delta, sodium ion specific (174 aa).

This sequence belongs to the ATPase delta chain family. As to quaternary structure, F-type ATPases have 2 components, F(1) - the catalytic core - and F(0) - the membrane proton channel. F(1) has five subunits: alpha(3), beta(3), gamma(1), delta(1), epsilon(1). F(0) has three main subunits: a(1), b(2) and c(10-14). The alpha and beta chains form an alternating ring which encloses part of the gamma chain. F(1) is attached to F(0) by a central stalk formed by the gamma and epsilon chains, while a peripheral stalk is formed by the delta and b chains.

Its subcellular location is the cell inner membrane. Functionally, f(1)F(0) ATP synthase produces ATP from ADP in the presence of a proton or sodium gradient. F-type ATPases consist of two structural domains, F(1) containing the extramembraneous catalytic core and F(0) containing the membrane proton channel, linked together by a central stalk and a peripheral stalk. During catalysis, ATP synthesis in the catalytic domain of F(1) is coupled via a rotary mechanism of the central stalk subunits to proton translocation. In terms of biological role, this protein is part of the stalk that links CF(0) to CF(1). It either transmits conformational changes from CF(0) to CF(1) or is implicated in proton conduction. The polypeptide is ATP synthase subunit delta, sodium ion specific (Ilyobacter tartaricus).